Reading from the N-terminus, the 1354-residue chain is Rho-associated protein kinase 1 (1354 aa).

The residue at position 2 (serine 2) is an N-acetylserine. Positions 76 to 338 (YEVVKVIGRG…VEEIKRHLFF (263 aa)) constitute a Protein kinase domain. ATP-binding positions include 82-90 (IGRGAFGEV) and lysine 105. The active-site Proton acceptor is the aspartate 198. The region spanning 341–409 (DQWAWETLRD…YSNRRYLSSA (69 aa)) is the AGC-kinase C-terminal domain. The segment at 368–727 (FDDLEEDKGE…KKLKEEREAR (360 aa)) is interaction with FHOD1. The stretch at 422 to 692 (KSLQESLQKT…RLEQEVNEHK (271 aa)) forms a coiled coil. One can recognise an REM-1 domain in the interval 479–556 (STVSQIEKEK…LEEANDLLRT (78 aa)). Lysine 647 is subject to N6-acetyllysine. The SHROOM3 binding stretch occupies residues 707–946 (EAKSVAMCEM…TVSRLEEANS (240 aa)). One can recognise a RhoBD domain in the interval 949-1015 (TKDIEILRRE…LAEIMNRKDF (67 aa)). Residues 998–1010 (LKTQAVNKLAEIM) are RHOA binding. A coiled-coil region spans residues 1011–1102 (NRKDFKIDRK…KLLDLSDSTS (92 aa)). A phosphoserine mark is found at serine 1105 and serine 1108. Residues 1115-1354 (NLPESRIEGW…VVKNTSGKTS (240 aa)) form an auto-inhibitory region. The 200-residue stretch at 1118–1317 (ESRIEGWLSV…WVTHLVKKIP (200 aa)) folds into the PH domain. The segment at 1228-1281 (GHEFIPTLYHFPANCDACAKPLWHVFKPPPALECRRCHVKCHRDHLDKKEDLIC) adopts a Phorbol-ester/DAG-type zinc-finger fold. Positions 1320-1354 (PPSGFVRASPRTLSTRSTANQSFRKVVKNTSGKTS) are disordered. Serine 1328 is subject to Phosphoserine. A compositionally biased stretch (polar residues) spans 1330–1354 (RTLSTRSTANQSFRKVVKNTSGKTS).

The protein belongs to the protein kinase superfamily. AGC Ser/Thr protein kinase family. Homodimer. Interacts with RHOB, RHOC, MYLC2B and PTEN. Interacts with ITGB1BP1 (via N-terminus and PTB domain). Interacts with RHOA (activated by GTP), CHORDC1, DAPK3, GEM, JIP3, RHOE, PPP1R12A, PFN1, LIMK1, LIMK2 and TSG101. Interacts with FHOD1 in a Src-dependent manner. Interacts with SHROOM3. Mg(2+) is required as a cofactor. Autophosphorylated on serine and threonine residues. In terms of processing, cleaved by caspase-3 during apoptosis. This leads to constitutive activation of the kinase and membrane blebbing. In terms of tissue distribution, detected in blood platelets.

It is found in the cytoplasm. The protein localises to the cytoskeleton. Its subcellular location is the microtubule organizing center. It localises to the centrosome. The protein resides in the centriole. It is found in the golgi apparatus membrane. The protein localises to the cell projection. Its subcellular location is the bleb. It localises to the cell membrane. The protein resides in the lamellipodium. It is found in the ruffle. The enzyme catalyses L-seryl-[protein] + ATP = O-phospho-L-seryl-[protein] + ADP + H(+). It catalyses the reaction L-threonyl-[protein] + ATP = O-phospho-L-threonyl-[protein] + ADP + H(+). With respect to regulation, activated by RHOA binding. Inhibited by Y-27632. Protein kinase which is a key regulator of the actin cytoskeleton and cell polarity. Involved in regulation of smooth muscle contraction, actin cytoskeleton organization, stress fiber and focal adhesion formation, neurite retraction, cell adhesion and motility via phosphorylation of DAPK3, GFAP, LIMK1, LIMK2, MYL9/MLC2, TPPP, PFN1 and PPP1R12A. Phosphorylates FHOD1 and acts synergistically with it to promote SRC-dependent non-apoptotic plasma membrane blebbing. Phosphorylates JIP3 and regulates the recruitment of JNK to JIP3 upon UVB-induced stress. Acts as a suppressor of inflammatory cell migration by regulating PTEN phosphorylation and stability. Acts as a negative regulator of VEGF-induced angiogenic endothelial cell activation. Required for centrosome positioning and centrosome-dependent exit from mitosis. Plays a role in terminal erythroid differentiation. Inhibits podocyte motility via regulation of actin cytoskeletal dynamics and phosphorylation of CFL1. Promotes keratinocyte terminal differentiation. Involved in osteoblast compaction through the fibronectin fibrillogenesis cell-mediated matrix assembly process, essential for osteoblast mineralization. May regulate closure of the eyelids and ventral body wall by inducing the assembly of actomyosin bundles. This is Rho-associated protein kinase 1 (ROCK1) from Homo sapiens (Human).